The following is a 272-amino-acid chain: Shikimate dehydrogenase (NADP(+)) (272 aa).

Shikimate-binding positions include Ser14–Ser16 and Thr61. The active-site Proton acceptor is the Lys65. Glu77 contacts NADP(+). Asn86 and Asp102 together coordinate shikimate. NADP(+) is bound by residues Gly126 to Ala130, Asn149 to Arg154, and Met213. Position 215 (Tyr215) interacts with shikimate. Gly237 contributes to the NADP(+) binding site.

Belongs to the shikimate dehydrogenase family. Homodimer.

The catalysed reaction is shikimate + NADP(+) = 3-dehydroshikimate + NADPH + H(+). Its pathway is metabolic intermediate biosynthesis; chorismate biosynthesis; chorismate from D-erythrose 4-phosphate and phosphoenolpyruvate: step 4/7. Its function is as follows. Involved in the biosynthesis of the chorismate, which leads to the biosynthesis of aromatic amino acids. Catalyzes the reversible NADPH linked reduction of 3-dehydroshikimate (DHSA) to yield shikimate (SA). The protein is Shikimate dehydrogenase (NADP(+)) of Citrobacter koseri (strain ATCC BAA-895 / CDC 4225-83 / SGSC4696).